The primary structure comprises 194 residues: A-type ATP synthase subunit E (194 aa).

The protein belongs to the V-ATPase E subunit family. In terms of assembly, has multiple subunits with at least A(3), B(3), C, D, E, F, H, I and proteolipid K(x).

The protein localises to the cell membrane. Its function is as follows. Component of the A-type ATP synthase that produces ATP from ADP in the presence of a proton gradient across the membrane. The chain is A-type ATP synthase subunit E from Saccharolobus islandicus (strain M.16.27) (Sulfolobus islandicus).